We begin with the raw amino-acid sequence, 211 residues long: Outer-membrane lipoprotein carrier protein (211 aa).

The first 24 residues, 1 to 24, serve as a signal peptide directing secretion; the sequence is MRNRIIVSACAALAMFAIQAPAHA.

This sequence belongs to the LolA family. Monomer.

It is found in the periplasm. In terms of biological role, participates in the translocation of lipoproteins from the inner membrane to the outer membrane. Only forms a complex with a lipoprotein if the residue after the N-terminal Cys is not an aspartate (The Asp acts as a targeting signal to indicate that the lipoprotein should stay in the inner membrane). This chain is Outer-membrane lipoprotein carrier protein, found in Cupriavidus necator (strain ATCC 17699 / DSM 428 / KCTC 22496 / NCIMB 10442 / H16 / Stanier 337) (Ralstonia eutropha).